The chain runs to 151 residues: uncharacterized protein (151 aa).

3 consecutive 4Fe-4S ferredoxin-type domains span residues 4–32 (KIIVLNPEKCTKCYDCINICKEIHGESRV), 33–63 (RKVDGIPIFCMQCENAPCKEICPVDAIYLKD), and 64–93 (GIPIVDKERCIACGMCAIACPIGAIFIKNR). [4Fe-4S] cluster-binding residues include cysteine 13, cysteine 16, cysteine 19, cysteine 23, cysteine 42, cysteine 45, cysteine 50, cysteine 54, cysteine 73, cysteine 76, cysteine 79, cysteine 83, cysteine 98, cysteine 101, cysteine 111, and cysteine 115.

[4Fe-4S] cluster serves as cofactor.

This is an uncharacterized protein from Methanocaldococcus jannaschii (strain ATCC 43067 / DSM 2661 / JAL-1 / JCM 10045 / NBRC 100440) (Methanococcus jannaschii).